The following is a 590-amino-acid chain: PWWP domain-containing protein 2B (590 aa).

4 disordered regions span residues 52–110 (APLP…PPLP), 182–347 (KSTL…EHEP), 360–398 (YLRD…PQGP), and 426–467 (DSLD…TVPP). Ser84 bears the Phosphoserine mark. Over residues 99-110 (PEPPPPLVPPLP) the composition is skewed to pro residues. Phosphoserine occurs at positions 186 and 206. Positions 208-217 (PDRELRKPEE) are enriched in basic and acidic residues. Ser250 carries the phosphoserine modification. A compositionally biased stretch (basic and acidic residues) spans 296–305 (VLDRESRDRP). Residues 376 to 385 (GLADLSSGSS) are compositionally biased toward low complexity. A Phosphoserine modification is found at Ser447. Residues 490–550 (VGDIVWGKIH…ISKLSPFSEF (61 aa)) enclose the PWWP domain.

Component of a MTA1-specific subcomplex of the NuRD complex composed of PWWP2B, MTA1 and HDAC1 but does not contain CHD4 and MBD3. Interacts with MTA1 and HDAC1. Interacts with MTA2, MTA3, HDAC2, RBBP4, RBBP7, BRCC3 and ZNF516. Does not interact with CHD4 and MBD3. Deubiquitinated by BRCC3; leading to its stabilization.

Chromatin-binding protein that acts as an adapter between distinct nucleosome components (H3K36me3 or H2A.Z) and chromatin-modifying complexes, contributing to the regulation of the levels of histone acetylation at actively transcribed genes. Competes with CHD4 and MBD3 for interaction with MTA1 to form a NuRD subcomplex, preventing the formation of full NuRD complex (containing CHD4 and MBD3), leading to recruitment of HDACs to gene promoters resulting in turn in the deacetylation of nearby H3K27 and H2A.Z. Plays a role in facilitating transcriptional elongation through regulation of histone acetylation. Negatively regulates brown adipocyte thermogenesis by interacting with and stabilizing HDAC1 at the UCP1 gene promoter, thereby promoting histone deacetylation at the promoter leading to the repression of UCP1 expression. The sequence is that of PWWP domain-containing protein 2B (PWWP2B) from Homo sapiens (Human).